The chain runs to 230 residues: Ribonuclease 3 (230 aa).

One can recognise an RNase III domain in the interval 7–134; it reads LEELESKLGI…VIAAIYLDKG (128 aa). Glu-47 is a Mg(2+) binding site. Asp-51 is a catalytic residue. Mg(2+) contacts are provided by Asp-120 and Glu-123. The active site involves Glu-123. One can recognise a DRBM domain in the interval 161–230; the sequence is DYKTRLQEIL…ACKALKGLDN (70 aa).

The protein belongs to the ribonuclease III family. In terms of assembly, homodimer. It depends on Mg(2+) as a cofactor.

Its subcellular location is the cytoplasm. The catalysed reaction is Endonucleolytic cleavage to 5'-phosphomonoester.. Digests double-stranded RNA. Involved in the processing of primary rRNA transcript to yield the immediate precursors to the large and small rRNAs (23S and 16S). Processes some mRNAs, and tRNAs when they are encoded in the rRNA operon. Processes pre-crRNA and tracrRNA of type II CRISPR loci if present in the organism. The chain is Ribonuclease 3 from Clostridium acetobutylicum (strain ATCC 824 / DSM 792 / JCM 1419 / IAM 19013 / LMG 5710 / NBRC 13948 / NRRL B-527 / VKM B-1787 / 2291 / W).